The chain runs to 346 residues: MKKVLLQNHPGSEKYSFNGWEIFNSNFERMIKENKAMLLCKWGFYLTCVVAVMFVFAAITSNGLNERGLITAGCSFLYLLIMMGLIVRAGFKAKKEQLHYYQAKGIEPLSIEKLQALQLIAPYRFYHKQWSETLEFWPRKPEPGKDTFQYHVLPFDSIDIISKRRESLEDQWGIEDSESYCALMEHFLSGDHGANTFKANMEEAPEQVIALLNKFAVFPSDYISDCANHSSGKSSAKLIWAAELSWMISISSTAFQNGTIEEELAWHYIMLASRKAHELFESEEDYQKNSQMGFLYWHICCYRRKLTDAELEACYRYDKQFWEHYSKKCRWPIRNVPWGASSVKYS.

Residues 1-38 (MKKVLLQNHPGSEKYSFNGWEIFNSNFERMIKENKAML) lie on the Periplasmic side of the membrane. Residues 39–59 (LCKWGFYLTCVVAVMFVFAAI) form a helical membrane-spanning segment. At 60–68 (TSNGLNERG) the chain is on the cytoplasmic side. A helical membrane pass occupies residues 69–89 (LITAGCSFLYLLIMMGLIVRA). The Periplasmic segment spans residues 90–234 (GFKAKKEQLH…DCANHSSGKS (145 aa)). A helical transmembrane segment spans residues 235-255 (SAKLIWAAELSWMISISSTAF). Over 256 to 346 (QNGTIEEELA…PWGASSVKYS (91 aa)) the chain is Cytoplasmic.

Its subcellular location is the cell inner membrane. This is Inner membrane protein YnjI (ynjI) from Escherichia coli (strain K12).